We begin with the raw amino-acid sequence, 498 residues long: Acetyl-coenzyme A carboxylase carboxyl transferase subunit beta, chloroplastic (498 aa).

The CoA carboxyltransferase N-terminal domain occupies 228-498 (LWVQCEICYG…LNHNLSRTLT (271 aa)). Zn(2+)-binding residues include Cys232, Cys235, Cys251, and Cys254. The C4-type zinc finger occupies 232–254 (CEICYGLNYKKFFKSKMNICEQC).

This sequence belongs to the AccD/PCCB family. As to quaternary structure, acetyl-CoA carboxylase is a heterohexamer composed of biotin carboxyl carrier protein, biotin carboxylase and 2 subunits each of ACCase subunit alpha and ACCase plastid-coded subunit beta (accD). Zn(2+) serves as cofactor.

Its subcellular location is the plastid. It localises to the chloroplast stroma. The enzyme catalyses N(6)-carboxybiotinyl-L-lysyl-[protein] + acetyl-CoA = N(6)-biotinyl-L-lysyl-[protein] + malonyl-CoA. Its pathway is lipid metabolism; malonyl-CoA biosynthesis; malonyl-CoA from acetyl-CoA: step 1/1. Component of the acetyl coenzyme A carboxylase (ACC) complex. Biotin carboxylase (BC) catalyzes the carboxylation of biotin on its carrier protein (BCCP) and then the CO(2) group is transferred by the transcarboxylase to acetyl-CoA to form malonyl-CoA. This is Acetyl-coenzyme A carboxylase carboxyl transferase subunit beta, chloroplastic from Populus alba (White poplar).